A 359-amino-acid chain; its full sequence is Probable deacetylase AF_0130 (359 aa).

Residue His-126 is the Proton donor/acceptor of the active site. Asp-162, His-164, and Asp-249 together coordinate Zn(2+).

It belongs to the histone deacetylase family. Zn(2+) serves as cofactor.

Functionally, probable deacetylase. This Archaeoglobus fulgidus (strain ATCC 49558 / DSM 4304 / JCM 9628 / NBRC 100126 / VC-16) protein is Probable deacetylase AF_0130.